Consider the following 554-residue polypeptide: MSEAEARPTNFIRQIIDEDLASGKHTTVHTRFPPEPNGYLHIGHAKSICLNFGIAQDYKGQCNLRFDDTNPVKEDIEYVESIKNDVEWLGFHWSGNVRYSSDYFDQLHAYAIELINKGLAYVDELTPEQIREYRGTLTQPGKNSPYRDRSVEENLALFEKMRAGGFEEGKACLRAKIDMASPFIVMRDPVLYRIKFAEHHQTGNKWCIYPMYDFTHCISDALEGITHSLCTLEFQDNRRLYDWVLDNITIPVHPRQYEFSRLNLEYTVMSKRKLNLLVTDKHVEGWDDPRMPTISGLRRRGYTAASIREFCKRIGVTKQDNTIEMASLESCIREDLNENAPRAMAVIDPVKLVIENYQGEGEMVTMPNHPNKPEMGSRQVPFSGEIWIDRADFREEANKQYKRLVLGKEVRLRNAYVIKAERVEKDAEGNITTIFCTYDADTLSKDPADGRKVKGVIHWVSAAHALPVEIRLYDRLFSVPNPGAADDFLSVINPESLVIKQGFAEPSLKDAVAGKAFQFEREGYFCLDSRHSTAEKPVFNRTVGLRDTWAKVGE.

The 'HIGH' region signature appears at 34–44; that stretch reads PEPNGYLHIGH. ATP is bound by residues 35–37 and 41–47; these read EPN and HIGHAKS. Asp67 and Tyr212 together coordinate L-glutamine. ATP-binding positions include Thr231, 261–262, and 269–271; these read RL and MSK. Positions 268 to 272 match the 'KMSKS' region motif; it reads VMSKR. An interaction with tRNA region spans residues 317 to 324; the sequence is TKQDNTIE.

The protein belongs to the class-I aminoacyl-tRNA synthetase family. Monomer.

The protein localises to the cytoplasm. The enzyme catalyses tRNA(Gln) + L-glutamine + ATP = L-glutaminyl-tRNA(Gln) + AMP + diphosphate. The protein is Glutamine--tRNA ligase of Escherichia coli (strain 55989 / EAEC).